Reading from the N-terminus, the 357-residue chain is MRASPLAVPANAPSRKKRLELDDDLDTECPSQKQARSGPQPRLPSCPLTLNPPPAPVHAPDVTTPSRLGPYVLLEPEEGSRTYRALHCPTGTEYICKVYPACERLAVLEPYWRLPHHGHVARPAEVLAGTQLLYAFFLRPHGDMHSLVRRRRRLPEPEAAALFRQMAAALAHCHQHGLVLRDLKLRRFVFTDRERTKLVLENLEDACVLTGPDDSLWDKHACPAYVGPEILSSRASYSGKAADVWSLGVALFTMLAGHYPFQDSEPALLFGKIRRGAFALPEGLSAPARCLVRCLLRREPTERLTASGILLHPWLRENAIPAALPRSRHCEADQVVPEGPGLEEAEEEGERDMGLYG.

Positions 1–63 (MRASPLAVPA…PAPVHAPDVT (63 aa)) are disordered. An interaction with DDIT3/CHOP region spans residues 1–127 (MRASPLAVPA…GHVARPAEVL (127 aa)). The region spanning 68–316 (LGPYVLLEPE…SGILLHPWLR (249 aa)) is the Protein kinase domain. The tract at residues 333 to 357 (DQVVPEGPGLEEAEEEGERDMGLYG) is disordered. Residues 341–350 (GLEEAEEEGE) show a composition bias toward acidic residues.

The protein belongs to the protein kinase superfamily. CAMK Ser/Thr protein kinase family. Tribbles subfamily. As to quaternary structure, interacts with AKT1, AKT2, MAP2K1 and MAP2K7. Interacts with ATF4. Interacts with DDIT3/CHOP and inhibits its interaction with EP300/P300. Interacts with APOBEC3C. Interacts (via N-terminus) with APOBEC3A. Interacts with RELA.

It is found in the nucleus. Functionally, inactive protein kinase which acts as a regulator of the integrated stress response (ISR), a process for adaptation to various stress. Inhibits the transcriptional activity of DDIT3/CHOP and is involved in DDIT3/CHOP-dependent cell death during ER stress. May play a role in programmed neuronal cell death but does not appear to affect non-neuronal cells. Acts as a negative feedback regulator of the ATF4-dependent transcription during the ISR: while TRIB3 expression is promoted by ATF4, TRIB3 protein interacts with ATF4 and inhibits ATF4 transcription activity. Disrupts insulin signaling by binding directly to Akt kinases and blocking their activation. May bind directly to and mask the 'Thr-308' phosphorylation site in AKT1. Interacts with the NF-kappa-B transactivator p65 RELA and inhibits its phosphorylation and thus its transcriptional activation activity. Interacts with MAPK kinases and regulates activation of MAP kinases. Can inhibit APOBEC3A editing of nuclear DNA. In Bos taurus (Bovine), this protein is Tribbles homolog 3 (TRIB3).